We begin with the raw amino-acid sequence, 73 residues long: Disintegrin molossin (73 aa).

Residues 1–73 (EAGIECDCGS…ADCPRNRFHA (73 aa)) form the Disintegrin domain. 6 disulfides stabilise this stretch: Cys6/Cys21, Cys8/Cys16, Cys15/Cys38, Cys29/Cys35, Cys34/Cys59, and Cys47/Cys66. The short motif at 51–53 (RGD) is the Cell attachment site element.

This sequence belongs to the venom metalloproteinase (M12B) family. P-II subfamily. P-IIa sub-subfamily. Monomer (disintegrin). Expressed by the venom gland.

Its subcellular location is the secreted. Its function is as follows. Inhibits fibrinogen interaction with platelets. Acts by binding to alpha-IIb/beta-3 (ITGA2B/ITGB3) on the platelet surface and inhibits aggregation induced by ADP, thrombin, platelet-activating factor and collagen. This Crotalus molossus molossus (Northern black-tailed rattlesnake) protein is Disintegrin molossin.